The chain runs to 34 residues: MSDINVIRAPLLILSILPCVGDDIEVLRRGEGLS.

Residues 1–10 (MSDINVIRAP) constitute a propeptide that is removed on maturation. The segment at residues 11-18 (LLILSILP) is a cross-link (cyclopeptide (Leu-Pro)). A propeptide spanning residues 19 to 34 (CVGDDIEVLRRGEGLS) is cleaved from the precursor.

It belongs to the MSDIN fungal toxin family. Processed by the macrocyclase-peptidase enzyme POPB to yield a toxic cyclic octapeptide. POPB first removes 10 residues from the N-terminus. Conformational trapping of the remaining peptide forces the enzyme to release this intermediate rather than proceed to macrocyclization. The enzyme rebinds the remaining peptide in a different conformation and catalyzes macrocyclization of the N-terminal 8 residues. Expressed in basidiocarps.

Probable toxin that belongs to the MSDIN-like toxin family responsible for a large number of food poisoning cases and deaths. The sequence is that of MSDIN-like toxin proprotein 3 from Amanita exitialis (Guangzhou destroying angel).